The primary structure comprises 350 residues: 4-hydroxythreonine-4-phosphate dehydrogenase (350 aa).

Residues His138 and Thr139 each contribute to the substrate site. A divalent metal cation-binding residues include His173, His218, and His273. 3 residues coordinate substrate: Lys281, Asn290, and Arg299.

This sequence belongs to the PdxA family. As to quaternary structure, homodimer. The cofactor is Zn(2+). Mg(2+) is required as a cofactor. Co(2+) serves as cofactor.

It is found in the cytoplasm. The enzyme catalyses 4-(phosphooxy)-L-threonine + NAD(+) = 3-amino-2-oxopropyl phosphate + CO2 + NADH. The protein operates within cofactor biosynthesis; pyridoxine 5'-phosphate biosynthesis; pyridoxine 5'-phosphate from D-erythrose 4-phosphate: step 4/5. Catalyzes the NAD(P)-dependent oxidation of 4-(phosphooxy)-L-threonine (HTP) into 2-amino-3-oxo-4-(phosphooxy)butyric acid which spontaneously decarboxylates to form 3-amino-2-oxopropyl phosphate (AHAP). The protein is 4-hydroxythreonine-4-phosphate dehydrogenase of Xanthobacter autotrophicus (strain ATCC BAA-1158 / Py2).